A 245-amino-acid polypeptide reads, in one-letter code: Tetraspanin-6 (245 aa).

The Cytoplasmic portion of the chain corresponds to 1-19 (MASPSRRLQTKPVITCFKS). Residues 20-40 (VLLIYTFIFWITGVILLAVGI) form a helical membrane-spanning segment. The Extracellular segment spans residues 41–59 (WGKVSLENYFSLLNEKATN). Residues 60–80 (VPFVLIATGTVIILLGTFGCF) traverse the membrane as a helical segment. Residues 81-93 (ATCRASAWMLKLY) lie on the Cytoplasmic side of the membrane. The chain crosses the membrane as a helical span at residues 94–114 (AMFLTLIFLVELVAAIVGFVF). At 115–208 (RHEIKNSFKN…IKVMTIIESE (94 aa)) the chain is on the extracellular side. Asn-134 is a glycosylation site (N-linked (GlcNAc...) asparagine). Residues 209-229 (MGVVAGISFGVACFQLIGIFL) traverse the membrane as a helical segment. The Cytoplasmic portion of the chain corresponds to 230–245 (AYCLSRAITNNQYEIV).

It belongs to the tetraspanin (TM4SF) family.

It is found in the membrane. This is Tetraspanin-6 (TSPAN6) from Pongo abelii (Sumatran orangutan).